The chain runs to 266 residues: Glucosamine-6-phosphate deaminase (266 aa).

D72 serves as the catalytic Proton acceptor; for enolization step. D141 functions as the For ring-opening step in the catalytic mechanism. The active-site Proton acceptor; for ring-opening step is the H143. E148 acts as the For ring-opening step in catalysis.

It belongs to the glucosamine/galactosamine-6-phosphate isomerase family. NagB subfamily. As to quaternary structure, homohexamer.

It catalyses the reaction alpha-D-glucosamine 6-phosphate + H2O = beta-D-fructose 6-phosphate + NH4(+). The protein operates within amino-sugar metabolism; N-acetylneuraminate degradation; D-fructose 6-phosphate from N-acetylneuraminate: step 5/5. Allosterically activated by N-acetylglucosamine 6-phosphate (GlcNAc6P). Its function is as follows. Catalyzes the reversible isomerization-deamination of glucosamine 6-phosphate (GlcN6P) to form fructose 6-phosphate (Fru6P) and ammonium ion. The polypeptide is Glucosamine-6-phosphate deaminase (Klebsiella pneumoniae subsp. pneumoniae (strain ATCC 700721 / MGH 78578)).